The following is a 105-amino-acid chain: Small ribosomal subunit protein uS10 (105 aa).

Belongs to the universal ribosomal protein uS10 family. As to quaternary structure, part of the 30S ribosomal subunit.

Its function is as follows. Involved in the binding of tRNA to the ribosomes. In Gloeothece citriformis (strain PCC 7424) (Cyanothece sp. (strain PCC 7424)), this protein is Small ribosomal subunit protein uS10.